A 126-amino-acid chain; its full sequence is Protein translocase subunit SecE (126 aa).

The next 3 membrane-spanning stretches (helical) occupy residues 20-40 (WLAA…YGEM), 42-62 (VVVR…VAAT), and 97-117 (IVLA…GIMV).

This sequence belongs to the SecE/SEC61-gamma family. In terms of assembly, component of the Sec protein translocase complex. Heterotrimer consisting of SecY, SecE and SecG subunits. The heterotrimers can form oligomers, although 1 heterotrimer is thought to be able to translocate proteins. Interacts with the ribosome. Interacts with SecDF, and other proteins may be involved. Interacts with SecA.

The protein localises to the cell inner membrane. Functionally, essential subunit of the Sec protein translocation channel SecYEG. Clamps together the 2 halves of SecY. May contact the channel plug during translocation. This Vibrio alginolyticus protein is Protein translocase subunit SecE.